The chain runs to 315 residues: tRNA pseudouridine synthase B (315 aa).

Asp-54 serves as the catalytic Nucleophile.

It belongs to the pseudouridine synthase TruB family. Type 1 subfamily.

It catalyses the reaction uridine(55) in tRNA = pseudouridine(55) in tRNA. In terms of biological role, responsible for synthesis of pseudouridine from uracil-55 in the psi GC loop of transfer RNAs. This Cupriavidus taiwanensis (strain DSM 17343 / BCRC 17206 / CCUG 44338 / CIP 107171 / LMG 19424 / R1) (Ralstonia taiwanensis (strain LMG 19424)) protein is tRNA pseudouridine synthase B.